The chain runs to 315 residues: MHSYTLHAPAKINLFLEILGDRPDGFHELVMVLQSIALGDKITVRANGTDDIRLSCGDSPLANDATNLAYRAAQLMINNFPQAHDNYGGVDITLTKHIPMAAGLAGGSADAAAVLVGLDLLWNLGLTRPELEQLAAQLGSDIPFCIGGGTAIATGRGEILDPLPDGNCFWVVLAKHRSIEVSTPWAYQTYRQKFGKNYLNDDQSQRARRKTIHAGPLLQGIQHRNPGQIASHIHNDLEKVVLPAHQPVAQLRQVLQSAGGLGTMMSGSGPSVFTLCREQAEAEQVLAIAKEKLNDPDVDFWLTHTIGHGIQIMNN.

The active site involves Lys11. 99 to 109 (PMAAGLAGGSA) contacts ATP. Asp141 is an active-site residue.

This sequence belongs to the GHMP kinase family. IspE subfamily.

It carries out the reaction 4-CDP-2-C-methyl-D-erythritol + ATP = 4-CDP-2-C-methyl-D-erythritol 2-phosphate + ADP + H(+). Its pathway is isoprenoid biosynthesis; isopentenyl diphosphate biosynthesis via DXP pathway; isopentenyl diphosphate from 1-deoxy-D-xylulose 5-phosphate: step 3/6. Catalyzes the phosphorylation of the position 2 hydroxy group of 4-diphosphocytidyl-2C-methyl-D-erythritol. This Synechocystis sp. (strain ATCC 27184 / PCC 6803 / Kazusa) protein is 4-diphosphocytidyl-2-C-methyl-D-erythritol kinase.